The following is a 143-amino-acid chain: uncharacterized protein (143 aa).

The HTH cro/C1-type domain maps to 24-78 (IRQRRRWQNMSQAALGEAIGVTFQQVQKYEKGSNRVGAGRLQQISDALEVHPSYF). The segment at residues 35 to 54 (QAALGEAIGVTFQQVQKYEK) is a DNA-binding region (H-T-H motif).

This is an uncharacterized protein from Sinorhizobium fredii (strain NBRC 101917 / NGR234).